We begin with the raw amino-acid sequence, 92 residues long: Small ribosomal subunit protein uS19 (92 aa).

The protein belongs to the universal ribosomal protein uS19 family.

In terms of biological role, protein S19 forms a complex with S13 that binds strongly to the 16S ribosomal RNA. The sequence is that of Small ribosomal subunit protein uS19 from Treponema denticola (strain ATCC 35405 / DSM 14222 / CIP 103919 / JCM 8153 / KCTC 15104).